The primary structure comprises 626 residues: DNA mismatch repair protein MutL (626 aa).

It belongs to the DNA mismatch repair MutL/HexB family.

In terms of biological role, this protein is involved in the repair of mismatches in DNA. It is required for dam-dependent methyl-directed DNA mismatch repair. May act as a 'molecular matchmaker', a protein that promotes the formation of a stable complex between two or more DNA-binding proteins in an ATP-dependent manner without itself being part of a final effector complex. The protein is DNA mismatch repair protein MutL of Pelodictyon phaeoclathratiforme (strain DSM 5477 / BU-1).